The primary structure comprises 345 residues: Phosphoribosylformylglycinamidine cyclo-ligase (345 aa).

The protein belongs to the AIR synthase family.

The protein localises to the cytoplasm. It catalyses the reaction 2-formamido-N(1)-(5-O-phospho-beta-D-ribosyl)acetamidine + ATP = 5-amino-1-(5-phospho-beta-D-ribosyl)imidazole + ADP + phosphate + H(+). It functions in the pathway purine metabolism; IMP biosynthesis via de novo pathway; 5-amino-1-(5-phospho-D-ribosyl)imidazole from N(2)-formyl-N(1)-(5-phospho-D-ribosyl)glycinamide: step 2/2. The chain is Phosphoribosylformylglycinamidine cyclo-ligase from Actinobacillus succinogenes (strain ATCC 55618 / DSM 22257 / CCUG 43843 / 130Z).